A 504-amino-acid chain; its full sequence is Sodium/proline symporter (504 aa).

The next 13 membrane-spanning stretches (helical) occupy residues 8 to 28 (LITFTIYIFGMLLIGVLAYYY), 50 to 70 (SAGASDMSGWLLMGLPGAVYL), 73 to 93 (LVEGWIAIGLTIGAYFNWLLV), 127 to 147 (LVSATIILVFLTIYCASGVVA), 163 to 183 (ALWYGAAATIAYTFIGGFLAV), 189 to 209 (IQATLMIFALILTPVFVLLSF), 240 to 260 (LGLLSLAAWGLGYFGQPHILA), 281 to 301 (WMVLCLAGAIGIGLFAIPYFF), 324 to 344 (LLFNPWIAGILLSAILAAVMS), 374 to 394 (ELVWLGRIMVLVIAALAIWIA), 405 to 425 (VEFAWAGFGSAFGPVVLFSLF), 434 to 454 (AMAGMLVGAVTVFAWKEVVPA), and 461 to 481 (VYEMIPGFAFASLAIIVISLL).

It belongs to the sodium:solute symporter (SSF) (TC 2.A.21) family.

The protein localises to the cell inner membrane. It catalyses the reaction L-proline(in) + Na(+)(in) = L-proline(out) + Na(+)(out). In terms of biological role, catalyzes the sodium-dependent uptake of extracellular L-proline. The sequence is that of Sodium/proline symporter (putP) from Haemophilus influenzae (strain ATCC 51907 / DSM 11121 / KW20 / Rd).